A 157-amino-acid polypeptide reads, in one-letter code: Crossover junction endodeoxyribonuclease RuvC (157 aa).

Residues D7, E67, and D140 contribute to the active site. Residues D7, E67, and D140 each contribute to the Mg(2+) site.

It belongs to the RuvC family. Homodimer which binds Holliday junction (HJ) DNA. The HJ becomes 2-fold symmetrical on binding to RuvC with unstacked arms; it has a different conformation from HJ DNA in complex with RuvA. In the full resolvosome a probable DNA-RuvA(4)-RuvB(12)-RuvC(2) complex forms which resolves the HJ. Mg(2+) serves as cofactor.

It localises to the cytoplasm. The catalysed reaction is Endonucleolytic cleavage at a junction such as a reciprocal single-stranded crossover between two homologous DNA duplexes (Holliday junction).. Its function is as follows. The RuvA-RuvB-RuvC complex processes Holliday junction (HJ) DNA during genetic recombination and DNA repair. Endonuclease that resolves HJ intermediates. Cleaves cruciform DNA by making single-stranded nicks across the HJ at symmetrical positions within the homologous arms, yielding a 5'-phosphate and a 3'-hydroxyl group; requires a central core of homology in the junction. The consensus cleavage sequence is 5'-(A/T)TT(C/G)-3'. Cleavage occurs on the 3'-side of the TT dinucleotide at the point of strand exchange. HJ branch migration catalyzed by RuvA-RuvB allows RuvC to scan DNA until it finds its consensus sequence, where it cleaves and resolves the cruciform DNA. The chain is Crossover junction endodeoxyribonuclease RuvC from Rickettsia typhi (strain ATCC VR-144 / Wilmington).